A 105-amino-acid polypeptide reads, in one-letter code: NADH-quinone oxidoreductase subunit K (105 aa).

Helical transmembrane passes span 4–24 (LTHY…GVIV), 28–48 (IIVI…SLVA), and 66–86 (LSIF…ALIV).

It belongs to the complex I subunit 4L family. In terms of assembly, NDH-1 is composed of 14 different subunits. Subunits NuoA, H, J, K, L, M, N constitute the membrane sector of the complex.

It localises to the cell inner membrane. The catalysed reaction is a quinone + NADH + 5 H(+)(in) = a quinol + NAD(+) + 4 H(+)(out). NDH-1 shuttles electrons from NADH, via FMN and iron-sulfur (Fe-S) centers, to quinones in the respiratory chain. The immediate electron acceptor for the enzyme in this species is believed to be ubiquinone. Couples the redox reaction to proton translocation (for every two electrons transferred, four hydrogen ions are translocated across the cytoplasmic membrane), and thus conserves the redox energy in a proton gradient. The chain is NADH-quinone oxidoreductase subunit K from Akkermansia muciniphila (strain ATCC BAA-835 / DSM 22959 / JCM 33894 / BCRC 81048 / CCUG 64013 / CIP 107961 / Muc).